A 65-amino-acid polypeptide reads, in one-letter code: Small ribosomal subunit protein bS21 (65 aa).

Over residues R46–Q57 the composition is skewed to basic residues. The tract at residues R46–S65 is disordered.

It belongs to the bacterial ribosomal protein bS21 family.

The chain is Small ribosomal subunit protein bS21 from Chlorobaculum tepidum (strain ATCC 49652 / DSM 12025 / NBRC 103806 / TLS) (Chlorobium tepidum).